A 40-amino-acid chain; its full sequence is Photosystem II reaction center protein J (40 aa).

The helical transmembrane segment at 8 to 28 (IPLWLIGTVTGIPVIGSMGIF) threads the bilayer.

It belongs to the PsbJ family. In terms of assembly, PSII is composed of 1 copy each of membrane proteins PsbA, PsbB, PsbC, PsbD, PsbE, PsbF, PsbH, PsbI, PsbJ, PsbK, PsbL, PsbM, PsbT, PsbX, PsbY, PsbZ, Psb30/Ycf12, at least 3 peripheral proteins of the oxygen-evolving complex and a large number of cofactors. It forms dimeric complexes.

The protein localises to the plastid. It is found in the chloroplast thylakoid membrane. One of the components of the core complex of photosystem II (PSII). PSII is a light-driven water:plastoquinone oxidoreductase that uses light energy to abstract electrons from H(2)O, generating O(2) and a proton gradient subsequently used for ATP formation. It consists of a core antenna complex that captures photons, and an electron transfer chain that converts photonic excitation into a charge separation. This is Photosystem II reaction center protein J from Illicium oligandrum (Star anise).